A 347-amino-acid chain; its full sequence is MSALGAVIALLLWGQLFAVDSGNDVMDISDDGCPKPPQIAHGYVEHSVRYQCKNYYRLRTEGDGVYTLNSEKQWINKAVGDKLPECEAVCGKPKNPANPVQRILGGHLDAKGSFPWQAKMVSRHNLTTGATLINEQWLLTTAKNLFLNHSENATAKDIAPTLTLYVGKKQLVEIEKVVLHPNYSQVDIGLIKLKQKVPVNERVMPICLPSKDYAEVGRVGYVSGWGRNANFKFTEHLKYVMLPVADQDQCVRHYEGSTVPEKKTPKSPVGVQPILNEHTFCAGMSKYQEDTCYGDAGSAFAVHDLEEDTWYAAGILSFDKSCAVAEYGVYVKVTSIQDWVQKTIAKN.

A signal peptide spans 1-18 (MSALGAVIALLLWGQLFA). Residues 31–88 (DGCPKPPQIAHGYVEHSVRYQCKNYYRLRTEGDGVYTLNSEKQWINKAVGDKLPECEA) form the Sushi domain. Cystine bridges form between C52/C86, C90/C207, C250/C281, and C292/C322. The region spanning 103 to 347 (ILGGHLDAKG…DWVQKTIAKN (245 aa)) is the Peptidase S1 domain. 4 N-linked (GlcNAc...) asparagine glycosylation sites follow: N125, N148, N152, and N182. Residues 259-264 (VPEKKT) are interaction with CD163.

It belongs to the peptidase S1 family. In terms of assembly, tetramer of two alpha and two beta chains; disulfide-linked. The hemoglobin/haptoglobin complex is composed of a haptoglobin dimer bound to two hemoglobin alpha-beta dimers. Interacts with CD163. Interacts with ERGIC3.

Its subcellular location is the secreted. Functionally, as a result of hemolysis, hemoglobin is found to accumulate in the kidney and is secreted in the urine. Haptoglobin captures, and combines with free plasma hemoglobin to allow hepatic recycling of heme iron and to prevent kidney damage. Haptoglobin also acts as an antioxidant, has antibacterial activity and plays a role in modulating many aspects of the acute phase response. Hemoglobin/haptoglobin complexes are rapidly cleared by the macrophage CD163 scavenger receptor expressed on the surface of liver Kupfer cells through an endocytic lysosomal degradation pathway. In Pongo abelii (Sumatran orangutan), this protein is Haptoglobin (HP).